A 420-amino-acid chain; its full sequence is D-tagatose-1,6-bisphosphate aldolase subunit GatZ (420 aa).

It belongs to the GatZ/KbaZ family. GatZ subfamily. Forms a complex with GatY.

It functions in the pathway carbohydrate metabolism; D-tagatose 6-phosphate degradation; D-glyceraldehyde 3-phosphate and glycerone phosphate from D-tagatose 6-phosphate: step 2/2. In terms of biological role, component of the tagatose-1,6-bisphosphate aldolase GatYZ that is required for full activity and stability of the Y subunit. Could have a chaperone-like function for the proper and stable folding of GatY. When expressed alone, GatZ does not show any aldolase activity. Is involved in the catabolism of galactitol. The chain is D-tagatose-1,6-bisphosphate aldolase subunit GatZ from Escherichia coli (strain SMS-3-5 / SECEC).